Reading from the N-terminus, the 173-residue chain is MNTSHIVLMICFIVGVGQTALALKEDDCEVCVKTVKRFADTLDDATKKDYKLIETAFKKYCKTQKNKEHRFCYYLGGLEESATGILNELSKPLSWSMPAEKVCEKLKKKDAQICDLRYEKQIDLNSVDLKKLKVRDLKKILNDWDESCDGCLEKSDFIKRIEELKPKYSRNEL.

The signal sequence occupies residues 1-22; that stretch reads MNTSHIVLMICFIVGVGQTALA. Cystine bridges form between C28–C114, C31–C103, C61–C72, and C148–C151.

The protein belongs to the ARMET family.

The protein localises to the secreted. In terms of biological role, required during the maturation of the embryonic nervous system for maintenance of neuronal and cuticular connectivity. Essential for maintenance of dopaminergic neurons and dopamine levels. The protein is Mesencephalic astrocyte-derived neurotrophic factor homolog of Drosophila virilis (Fruit fly).